A 574-amino-acid chain; its full sequence is Isocitrate dehydrogenase kinase/phosphatase (574 aa).

ATP contacts are provided by residues 311 to 317 (APGIRGM) and lysine 332. Aspartate 367 is an active-site residue.

Belongs to the AceK family.

The protein resides in the cytoplasm. The enzyme catalyses L-seryl-[isocitrate dehydrogenase] + ATP = O-phospho-L-seryl-[isocitrate dehydrogenase] + ADP + H(+). In terms of biological role, bifunctional enzyme which can phosphorylate or dephosphorylate isocitrate dehydrogenase (IDH) on a specific serine residue. This is a regulatory mechanism which enables bacteria to bypass the Krebs cycle via the glyoxylate shunt in response to the source of carbon. When bacteria are grown on glucose, IDH is fully active and unphosphorylated, but when grown on acetate or ethanol, the activity of IDH declines drastically concomitant with its phosphorylation. This Shigella boydii serotype 4 (strain Sb227) protein is Isocitrate dehydrogenase kinase/phosphatase.